A 196-amino-acid polypeptide reads, in one-letter code: Peptide methionine sulfoxide reductase MsrA 2 (196 aa).

The active site involves cysteine 36.

It belongs to the MsrA Met sulfoxide reductase family.

It catalyses the reaction L-methionyl-[protein] + [thioredoxin]-disulfide + H2O = L-methionyl-(S)-S-oxide-[protein] + [thioredoxin]-dithiol. The enzyme catalyses [thioredoxin]-disulfide + L-methionine + H2O = L-methionine (S)-S-oxide + [thioredoxin]-dithiol. Functionally, has an important function as a repair enzyme for proteins that have been inactivated by oxidation. Catalyzes the reversible oxidation-reduction of methionine sulfoxide in proteins to methionine. The chain is Peptide methionine sulfoxide reductase MsrA 2 (msrA2) from Caulobacter vibrioides (strain ATCC 19089 / CIP 103742 / CB 15) (Caulobacter crescentus).